A 299-amino-acid chain; its full sequence is Zinc finger protein-like 1 homolog (299 aa).

A B box-type; degenerate zinc finger spans residues 1–43; that stretch reads MGLCKCPKRLVTNQFCFEHRVNVCEHCMVQSHPKCIVQSYLQW. An RING-type; atypical zinc finger spans residues 53-101; it reads CTLCGTTLEQGDCVRLVCYHVFHWDCLNARQAALPANTAPRGHQCPACS. The disordered stretch occupies residues 200–231; that stretch reads AGDYASSRRPLLPRQSPIGGTDRDDNKYQRRT. Serine 215 bears the Phosphoserine mark. A helical membrane pass occupies residues 256–276; sequence WFLVTAGILAFVLFVYLMAWL.

It belongs to the ZFPL1 family.

The protein localises to the membrane. This is Zinc finger protein-like 1 homolog from Drosophila melanogaster (Fruit fly).